The primary structure comprises 448 residues: tRNA modification GTPase MnmE (448 aa).

3 residues coordinate (6S)-5-formyl-5,6,7,8-tetrahydrofolate: R22, E83, and R122. A TrmE-type G domain is found at 219–369 (GVKTVIVGRP…LESEILKTLK (151 aa)). Residue N229 participates in K(+) binding. Residues 229 to 234 (NVGKSS), 248 to 254 (SDIAGTT), and 273 to 276 (DTAG) contribute to the GTP site. Residue S233 coordinates Mg(2+). Residues S248, I250, and T253 each coordinate K(+). Position 254 (T254) interacts with Mg(2+). K448 serves as a coordination point for (6S)-5-formyl-5,6,7,8-tetrahydrofolate.

The protein belongs to the TRAFAC class TrmE-Era-EngA-EngB-Septin-like GTPase superfamily. TrmE GTPase family. In terms of assembly, homodimer. Heterotetramer of two MnmE and two MnmG subunits. K(+) is required as a cofactor.

It is found in the cytoplasm. In terms of biological role, exhibits a very high intrinsic GTPase hydrolysis rate. Involved in the addition of a carboxymethylaminomethyl (cmnm) group at the wobble position (U34) of certain tRNAs, forming tRNA-cmnm(5)s(2)U34. The polypeptide is tRNA modification GTPase MnmE (Acholeplasma laidlawii (strain PG-8A)).